Consider the following 276-residue polypeptide: Undecaprenyl-diphosphatase (276 aa).

Helical transmembrane passes span 42 to 62, 88 to 108, 116 to 136, 149 to 169, 187 to 207, 222 to 242, and 253 to 273; these read AVTA…IVYF, ALLG…GYLG, LRSL…IVYA, MRLP…VPGV, VAAT…AGIF, SLVV…AWLL, and FVWY…TGLV.

This sequence belongs to the UppP family.

It is found in the cell membrane. It catalyses the reaction di-trans,octa-cis-undecaprenyl diphosphate + H2O = di-trans,octa-cis-undecaprenyl phosphate + phosphate + H(+). Functionally, catalyzes the dephosphorylation of undecaprenyl diphosphate (UPP). Confers resistance to bacitracin. In Acidothermus cellulolyticus (strain ATCC 43068 / DSM 8971 / 11B), this protein is Undecaprenyl-diphosphatase.